Here is a 229-residue protein sequence, read N- to C-terminus: 7-cyano-7-deazaguanine synthase (229 aa).

Residue 7-17 coordinates ATP; that stretch reads LSGGLDSSTIL. 4 residues coordinate Zn(2+): cysteine 191, cysteine 199, cysteine 202, and cysteine 205.

The protein belongs to the QueC family. It depends on Zn(2+) as a cofactor.

It carries out the reaction 7-carboxy-7-deazaguanine + NH4(+) + ATP = 7-cyano-7-deazaguanine + ADP + phosphate + H2O + H(+). Its pathway is purine metabolism; 7-cyano-7-deazaguanine biosynthesis. Catalyzes the ATP-dependent conversion of 7-carboxy-7-deazaguanine (CDG) to 7-cyano-7-deazaguanine (preQ(0)). This is 7-cyano-7-deazaguanine synthase from Nostoc sp. (strain PCC 7120 / SAG 25.82 / UTEX 2576).